The primary structure comprises 231 residues: Large ribosomal subunit protein uL1 (231 aa).

It belongs to the universal ribosomal protein uL1 family. As to quaternary structure, part of the 50S ribosomal subunit.

Functionally, binds directly to 23S rRNA. The L1 stalk is quite mobile in the ribosome, and is involved in E site tRNA release. Its function is as follows. Protein L1 is also a translational repressor protein, it controls the translation of the L11 operon by binding to its mRNA. The protein is Large ribosomal subunit protein uL1 of Buchnera aphidicola subsp. Acyrthosiphon pisum (strain 5A).